A 436-amino-acid chain; its full sequence is G2/mitotic-specific cyclin-B (436 aa).

Positions 1-17 (MSTINNPLNIKTRSHSS) are enriched in polar residues. Positions 1-33 (MSTINNPLNIKTRSHSSMGGGMIMDENKVPKSS) are disordered.

It belongs to the cyclin family. Cyclin AB subfamily. As to quaternary structure, interacts with the cdk1 protein kinase to form a serine/threonine kinase holoenzyme complex also known as maturation promoting factor (MPF). The cyclin subunit imparts substrate specificity to the complex.

Essential for the control of the cell cycle at the G2/M (mitosis) transition. This chain is G2/mitotic-specific cyclin-B (cycB), found in Dictyostelium discoideum (Social amoeba).